The following is a 404-amino-acid chain: Druantia protein DruA (404 aa).

It localises to the cytoplasm. In terms of biological role, component of antiviral defense system Druantia type I, composed of DruA, DruB, DruC, DruD and DruE. Expression of Druantia in E.coli (strain MG1655) confers resistance to phage lambda, SECphi18, SECphi27 and T4. This is Druantia protein DruA from Escherichia coli (strain UMEA 4076-1).